A 798-amino-acid polypeptide reads, in one-letter code: MVALPMVLVLLLVLSRGESELDAKIPSTGDATEWRNPHLSMLGSCQPAPSCQKCILSHPSCAWCKQLNFTASGEAEARRCARREELLARGCPLEELEEPRGQQEVLQDQPLSQGARGEGATQLAPQRVRVTLRPGEPQQLQVRFLRAEGYPVDLYYLMDLSYSMKDDLERVRQLGHALLVRLQEVTHSVRIGFGSFVDKTVLPFVSTVPSKLRHPCPTRLERCQSPFSFHHVLSLTGDAQAFEREVGRQSVSGNLDSPEGGFDAILQAALCQEQIGWRNVSRLLVFTSDDTFHTAGDGKLGGIFMPSDGHCHLDSNGLYSRSTEFDYPSVGQVAQALSAANIQPIFAVTSAALPVYQELSKLIPKSAVGELSEDSSNVVQLIMDAYNSLSSTVTLEHSSLPPGVHISYESQCEGPEKREGKAEDRGQCNHVRINQTVTFWVSLQATHCLPEPHLLRLRALGFSEELIVELHTLCDCNCSDTQPQAPHCSDGQGHLQCGVCSCAPGRLGRLCECSVAELSSPDLESGCRAPNGTGPLCSGKGHCQCGRCSCSGQSSGHLCECDDASCERHEGILCGGFGRCQCGVCHCHANRTGRACECSGDMDSCISPEGGLCSGHGRCKCNRCQCLDGYYGALCDQCPGCKTPCERHRDCAECGAFRTGPLATNCSTACAHTNVTLALAPILDDGWCKERTLDNQLFFFLVEDDARGTVVLRVRPQEKGADHTQAIVLGCVGGIVAVGLGLVLAYRLSVEIYDRREYSRFEKEQQQLNWKQDSNPLYKSAITTTINPRFQEADSPTL.

Positions 1–19 (MVALPMVLVLLLVLSRGES) are cleaved as a signal peptide. Residues 20-723 (ELDAKIPSTG…VRPQEKGADH (704 aa)) are Extracellular-facing. One can recognise a PSI domain in the interval 44 to 92 (SCQPAPSCQKCILSHPSCAWCKQLNFTASGEAEARRCARREELLARGCP). 7 disulfides stabilise this stretch: cysteine 51-cysteine 476, cysteine 54-cysteine 80, cysteine 64-cysteine 91, cysteine 216-cysteine 223, cysteine 271-cysteine 311, cysteine 412-cysteine 428, and cysteine 448-cysteine 474. A glycan (N-linked (GlcNAc...) asparagine) is linked at asparagine 68. Positions 98–124 (EPRGQQEVLQDQPLSQGARGEGATQLA) are disordered. The VWFA domain occupies 150 to 389 (YPVDLYYLMD…QLIMDAYNSL (240 aa)). Residues serine 161 and serine 163 each coordinate Mg(2+). Ca(2+) contacts are provided by serine 163, aspartate 166, aspartate 167, and aspartate 198. The Ca(2+) site is built by asparagine 254, aspartate 256, proline 258, and glutamate 259. Mg(2+) is bound at residue glutamate 259. Asparagine 279 carries N-linked (GlcNAc...) asparagine glycosylation. Residues aspartate 289 and glutamate 373 each contribute to the Ca(2+) site. The N-linked (GlcNAc...) asparagine glycan is linked to asparagine 434. Residue asparagine 477 is glycosylated (N-linked (GlcNAc...) asparagine). Cystine bridges form between cysteine 478–cysteine 497, cysteine 488–cysteine 500, cysteine 502–cysteine 511, cysteine 513–cysteine 545, cysteine 527–cysteine 543, cysteine 537–cysteine 548, cysteine 550–cysteine 559, cysteine 561–cysteine 582, cysteine 566–cysteine 580, cysteine 574–cysteine 585, cysteine 587–cysteine 596, cysteine 598–cysteine 621, cysteine 605–cysteine 619, cysteine 613–cysteine 624, cysteine 626–cysteine 635, cysteine 638–cysteine 641, cysteine 645–cysteine 688, cysteine 651–cysteine 670, and cysteine 654–cysteine 666. I-EGF domains follow at residues 478-512 (CSDT…RLCE), 513-560 (CSVA…HLCE), 561-597 (CDDA…RACE), and 598-636 (CSGD…ALCD). Asparagine 531 carries an N-linked (GlcNAc...) asparagine glycan. Asparagine 590 carries N-linked (GlcNAc...) asparagine glycosylation. N-linked (GlcNAc...) asparagine glycans are attached at residues asparagine 665 and asparagine 674. Residues 724 to 746 (TQAIVLGCVGGIVAVGLGLVLAY) form a helical membrane-spanning segment. Residues 747–798 (RLSVEIYDRREYSRFEKEQQQLNWKQDSNPLYKSAITTTINPRFQEADSPTL) lie on the Cytoplasmic side of the membrane. A Phosphotyrosine; by Tyr-kinases modification is found at tyrosine 778.

Belongs to the integrin beta chain family. As to quaternary structure, heterodimer of an alpha and a beta subunit. ITGB7/beta-7 associates with either ITGA4/alpha-4 or ITGAE/alpha-E. Integrin ITGA4/ITGB7 interacts with MADCAM1. Integrin ITGA4/ITGB7 interacts with VCAM1 and fibronectin. Interacts with FLNA (via filamin repeats 4, 9, 12, 17, 19, 21, and 23). In terms of assembly, (Microbial infection) May interact with HIV-1 gp120. As to expression, expressed in a variety of leukocyte lines.

The protein resides in the cell membrane. Its function is as follows. Integrin ITGA4/ITGB7 (alpha-4/beta-7) (Peyer patches-specific homing receptor LPAM-1) is an adhesion molecule that mediates lymphocyte migration and homing to gut-associated lymphoid tissue (GALT). Integrin ITGA4/ITGB7 interacts with the cell surface adhesion molecules MADCAM1 which is normally expressed by the vascular endothelium of the gastrointestinal tract. Also interacts with VCAM1 and fibronectin, an extracellular matrix component. It recognizes one or more domains within the alternatively spliced CS-1 region of fibronectin. Interactions involve the tripeptide L-D-T in MADCAM1, and L-D-V in fibronectin. Integrin ITGAE/ITGB7 (alpha-E/beta-7, HML-1) is a receptor for E-cadherin. In terms of biological role, (Microbial infection) Binds to HIV-1 gp120, thereby allowing the virus to enter GALT, which is thought to be the major trigger of AIDS disease. Interaction would involve a tripeptide L-D-I in HIV-1 gp120. The protein is Integrin beta-7 (ITGB7) of Homo sapiens (Human).